Here is a 185-residue protein sequence, read N- to C-terminus: MINDIKKDAQERMGKSIEALSRNLAAIRTGRAHPSILDSVKVTAWGSEMPLNQVAAITVEDARTLKIVAHDKNLSAAIEKAILTSDLGLNPSSAGTTIRVPMPALTEETRKGYTKQASGVAEDAKVAVRNVRRDALADLKKLTKDKEISEDEERRAADEIQKLTDKFVAEVDAAFKAKEKDLMAV.

This sequence belongs to the RRF family.

It localises to the cytoplasm. Functionally, responsible for the release of ribosomes from messenger RNA at the termination of protein biosynthesis. May increase the efficiency of translation by recycling ribosomes from one round of translation to another. The protein is Ribosome-recycling factor of Pseudomonas putida (strain ATCC 700007 / DSM 6899 / JCM 31910 / BCRC 17059 / LMG 24140 / F1).